Reading from the N-terminus, the 251-residue chain is Probable transcriptional regulatory protein MLBr00475 (251 aa).

This sequence belongs to the TACO1 family.

It is found in the cytoplasm. This is Probable transcriptional regulatory protein MLBr00475 from Mycobacterium leprae (strain Br4923).